A 235-amino-acid chain; its full sequence is MICOS complex subunit MIC25 (235 aa).

The N-myristoyl glycine moiety is linked to residue G2. A phosphoserine mark is found at S13 and S31. Disordered stretches follow at residues 31–90 (SENV…VKRY) and 106–132 (KREREAATKHSKASLPTGEGSISHEEQ). The stretch at 129–176 (HEEQKSVRLARELESREAELRRRDTFYKEQLERIERKNAEMYKLSSEQ) forms a coiled coil. A CHCH domain is found at 194-235 (EPVCSGLQAQILHCYRDRPHEVLLCSDLVKAYQRCVSAAHKG). Short sequence motifs (cx9C motif) lie at residues 197 to 207 (CSGLQAQILHC) and 218 to 228 (CSDLVKAYQRC). Disulfide bonds link C197–C228 and C207–C218.

This sequence belongs to the MICOS complex subunit Mic19 family. Metazoan Mic25 subfamily. Component of the mitochondrial contact site and cristae organizing system (MICOS) complex, composed of at least MICOS10/MIC10, CHCHD3/MIC19, CHCHD6/MIC25, APOOL/MIC27, IMMT/MIC60, APOO/MIC23/MIC26 and MICOS13/MIC13. This complex was also known under the names MINOS or MitOS complex. The MICOS complex associates with mitochondrial outer membrane proteins SAMM50, MTX1 and MTX2 (together described as components of the mitochondrial outer membrane sorting assembly machinery (SAM) complex) and DNAJC11, mitochondrial inner membrane protein TMEM11 and with HSPA9. The MICOS and SAM complexes together with DNAJC11 are part of a large protein complex spanning both membranes termed the mitochondrial intermembrane space bridging (MIB) complex. Interacts with DISC1. Interacts with DISC1. Interacts with IMMT/MIC60. As to quaternary structure, (Microbial infection) Interacts with human cytomegalovirus protein UL37 isoform vMIA; this interaction rewires mitochondria by engaging the conserved MICOS complex.

The protein localises to the mitochondrion inner membrane. Its subcellular location is the mitochondrion. Functionally, component of the MICOS complex, a large protein complex of the mitochondrial inner membrane that plays crucial roles in the maintenance of crista junctions, inner membrane architecture, and formation of contact sites to the outer membrane. The polypeptide is MICOS complex subunit MIC25 (CHCHD6) (Homo sapiens (Human)).